We begin with the raw amino-acid sequence, 342 residues long: MSEAIKTDVLIVGAGPCGLFAVFELGLLDVKVHLVDILDKIGGQCAELYPEKPIYDIPGIPMITGHGLTESLLEQIKPFNPTFHLNEMIETVEKIGDPGFRVTTDAGKVFECKVLVVAAGGGSFQPKRPPVPGIEAYEGGSVHYAVRKMEEFRDKDLMIVGGGDSALDWVLNLHPLAKRITLVHRRDDFRAAPHSVEQMRALVASGQMDLLIGQVTALDGEGKELSAATVKGNDGTTTKVACNAMLPFFGLTMKLGPVANWGLHLENNLVPVDTGTFETNVPGIFAIGDINTYPGKLKLILSGFHEGALMAQKAVKYVYPDKRVVFQYTTSSSSLQKKLGVN.

FAD contacts are provided by cysteine 17, aspartate 36, glutamine 44, tyrosine 49, isoleucine 89, phenylalanine 124, aspartate 289, and threonine 330.

The protein belongs to the ferredoxin--NADP reductase type 2 family. In terms of assembly, homodimer. FAD serves as cofactor.

It carries out the reaction 2 reduced [2Fe-2S]-[ferredoxin] + NADP(+) + H(+) = 2 oxidized [2Fe-2S]-[ferredoxin] + NADPH. The protein is Ferredoxin--NADP reductase of Rhodopseudomonas palustris (strain BisB18).